We begin with the raw amino-acid sequence, 180 residues long: Large ribosomal subunit protein uL5 (180 aa).

The protein belongs to the universal ribosomal protein uL5 family. Part of the 50S ribosomal subunit; part of the 5S rRNA/L5/L18/L25 subcomplex. Contacts the 5S rRNA and the P site tRNA. Forms a bridge to the 30S subunit in the 70S ribosome.

In terms of biological role, this is one of the proteins that bind and probably mediate the attachment of the 5S RNA into the large ribosomal subunit, where it forms part of the central protuberance. In the 70S ribosome it contacts protein S13 of the 30S subunit (bridge B1b), connecting the 2 subunits; this bridge is implicated in subunit movement. Contacts the P site tRNA; the 5S rRNA and some of its associated proteins might help stabilize positioning of ribosome-bound tRNAs. The chain is Large ribosomal subunit protein uL5 from Latilactobacillus sakei subsp. sakei (strain 23K) (Lactobacillus sakei subsp. sakei).